The sequence spans 136 residues: Selenoprotein M (136 aa).

Positions 1–19 (MWLPLPLLLGLLQLQPILS) are cleaved as a signal peptide. Active-site nucleophile residues include C38 and U41. The segment at residues 38-41 (CGGU) is a cross-link (cysteinyl-selenocysteine (Cys-Sec)). A non-standard amino acid (selenocysteine) is located at residue U41. Residues 111–136 (SSPDAPVPAEFKMAPARASGDTKEDL) are disordered. A Prevents secretion from ER motif is present at residues 133 to 136 (KEDL).

The protein belongs to the selenoprotein M/F family.

It is found in the endoplasmic reticulum. In terms of biological role, may function as a thiol-disulfide oxidoreductase that participates in disulfide bond formation. This chain is Selenoprotein M (selenom), found in Xenopus laevis (African clawed frog).